We begin with the raw amino-acid sequence, 419 residues long: MDKFRVQGPTTLQGEVTISGAKNAALPILFAALLAEEPVEIQNVPKLKDVDTSMKLLSQLGAKVERNGSVHIDASQVNVFCAPYDLVKTMRASIWALGPLVARFGQGQVSLPGGCTIGARPVDLHITGLEQLGATIKLEEGYVKASVEGRLKGAHIVMDKVSVGATVTIMCAATLAEGTTIIENAAREPEIVDTANFLVTLGAKIAGQGTDRITIEGVERLGGGVYRVLPDRIETGTFLVAAAISRGKILCRNAQPDTLDAVLAKLRDAGADIEVGEDWISLDMHGKRPKAVNVRTAPHPAFPTDMQAQFTLLNLVAQGTGFITETVFENRFMHVPELSRMGARAEIESNTVICHGVETLSGAQVMATDLRASASLVLAGCIAEGTTIVDRIYHIDRGYERIEDKLRALGANIERVKGE.

Phosphoenolpyruvate is bound at residue 22-23 (KN). Residue Arg-91 coordinates UDP-N-acetyl-alpha-D-glucosamine. Catalysis depends on Cys-115, which acts as the Proton donor. Cys-115 is modified (2-(S-cysteinyl)pyruvic acid O-phosphothioketal). UDP-N-acetyl-alpha-D-glucosamine is bound by residues 120–124 (RPVDL), 160–163 (KVSV), Asp-305, and Val-327.

The protein belongs to the EPSP synthase family. MurA subfamily.

It localises to the cytoplasm. The enzyme catalyses phosphoenolpyruvate + UDP-N-acetyl-alpha-D-glucosamine = UDP-N-acetyl-3-O-(1-carboxyvinyl)-alpha-D-glucosamine + phosphate. Its pathway is cell wall biogenesis; peptidoglycan biosynthesis. In terms of biological role, cell wall formation. Adds enolpyruvyl to UDP-N-acetylglucosamine. The protein is UDP-N-acetylglucosamine 1-carboxyvinyltransferase of Salmonella schwarzengrund (strain CVM19633).